A 471-amino-acid chain; its full sequence is ATP synthase subunit beta (471 aa).

Position 156-163 (156-163 (GGAGVGKT)) interacts with ATP.

This sequence belongs to the ATPase alpha/beta chains family. F-type ATPases have 2 components, CF(1) - the catalytic core - and CF(0) - the membrane proton channel. CF(1) has five subunits: alpha(3), beta(3), gamma(1), delta(1), epsilon(1). CF(0) has three main subunits: a(1), b(2) and c(9-12). The alpha and beta chains form an alternating ring which encloses part of the gamma chain. CF(1) is attached to CF(0) by a central stalk formed by the gamma and epsilon chains, while a peripheral stalk is formed by the delta and b chains.

It localises to the cell membrane. It catalyses the reaction ATP + H2O + 4 H(+)(in) = ADP + phosphate + 5 H(+)(out). Functionally, produces ATP from ADP in the presence of a proton gradient across the membrane. The catalytic sites are hosted primarily by the beta subunits. The chain is ATP synthase subunit beta from Lysinibacillus sphaericus (strain C3-41).